A 333-amino-acid chain; its full sequence is Coiled-coil domain-containing protein 68 (333 aa).

Coiled-coil stretches lie at residues 86 to 120 (LDLL…SREA) and 160 to 302 (EKEQ…HWTE).

As to quaternary structure, interacts with CEP170.

It is found in the cytoplasm. The protein resides in the cytoskeleton. Its subcellular location is the microtubule organizing center. The protein localises to the centrosome. It localises to the centriole. Functionally, centriolar protein required for centriole subdistal appendage assembly and microtubule anchoring in interphase cells. Together with CCDC120, cooperate with subdistal appendage components ODF2, NIN and CEP170 for hierarchical subdistal appendage assembly. This Mus musculus (Mouse) protein is Coiled-coil domain-containing protein 68 (Ccdc68).